Consider the following 455-residue polypeptide: tRNA modification GTPase MnmE (455 aa).

Positions 26, 86, and 125 each coordinate (6S)-5-formyl-5,6,7,8-tetrahydrofolate. The TrmE-type G domain maps to 222 to 376 (GLKTAIIGRP…VEEKINQIFF (155 aa)). Asparagine 232 provides a ligand contact to K(+). GTP-binding positions include 232–237 (NVGKSS), 251–257 (TDIAGTT), and 276–279 (DTAG). Serine 236 serves as a coordination point for Mg(2+). K(+) contacts are provided by threonine 251, isoleucine 253, and threonine 256. Threonine 257 is a binding site for Mg(2+). Residue lysine 455 participates in (6S)-5-formyl-5,6,7,8-tetrahydrofolate binding.

Belongs to the TRAFAC class TrmE-Era-EngA-EngB-Septin-like GTPase superfamily. TrmE GTPase family. As to quaternary structure, homodimer. Heterotetramer of two MnmE and two MnmG subunits. K(+) is required as a cofactor.

It is found in the cytoplasm. Exhibits a very high intrinsic GTPase hydrolysis rate. Involved in the addition of a carboxymethylaminomethyl (cmnm) group at the wobble position (U34) of certain tRNAs, forming tRNA-cmnm(5)s(2)U34. This is tRNA modification GTPase MnmE from Lactococcus lactis subsp. cremoris (strain MG1363).